Reading from the N-terminus, the 355-residue chain is Enhancer of mRNA-decapping protein 1 (355 aa).

Disordered regions lie at residues 1–146 (MSSD…VDGM), 210–230 (MSQPMSQPMSQPMSQPMSQPM), and 301–330 (NSTAKASVRSKGSPGSEGGSRRSQNWKSSQ). The span at 39 to 49 (AQKQQLPNGEQ) shows a compositional bias: polar residues. Residues 57–67 (KQSRKRGSGRQ) show a composition bias toward basic residues. The segment covering 91–110 (SIPSGSAGSESAQKETSAGQ) has biased composition (polar residues). Positions 123–142 (VPAGGPAGKSSSEPASASSA) are enriched in low complexity.

Belongs to the EDC family.

It localises to the cytoplasm. Its function is as follows. mRNA-binding protein which stimulates mRNA decapping. The protein is Enhancer of mRNA-decapping protein 1 (EDC1) of Eremothecium gossypii (strain ATCC 10895 / CBS 109.51 / FGSC 9923 / NRRL Y-1056) (Yeast).